The following is a 228-amino-acid chain: Mediator of RNA polymerase II transcription subunit 7-A (228 aa).

The protein belongs to the Mediator complex subunit 7 family. As to quaternary structure, component of the Mediator complex.

The protein localises to the nucleus. Its function is as follows. Component of the Mediator complex, a coactivator involved in the regulated transcription of nearly all RNA polymerase II-dependent genes. Mediator functions as a bridge to convey information from gene-specific regulatory proteins to the basal RNA polymerase II transcription machinery. Mediator is recruited to promoters by direct interactions with regulatory proteins and serves as a scaffold for the assembly of a functional preinitiation complex with RNA polymerase II and the general transcription factors. The chain is Mediator of RNA polymerase II transcription subunit 7-A (med7-a) from Xenopus laevis (African clawed frog).